The sequence spans 246 residues: Isoprenyl transferase (246 aa).

Residue Asp-18 is part of the active site. Asp-18 lines the Mg(2+) pocket. Substrate is bound by residues 19–22 (GNGR), Trp-23, Arg-31, His-35, and 63–65 (SAE). The active-site Proton acceptor is Asn-66. Substrate-binding positions include Trp-67, Arg-69, Arg-186, and 192–194 (RIS). Glu-205 serves as a coordination point for Mg(2+).

It belongs to the UPP synthase family. As to quaternary structure, homodimer. Requires Mg(2+) as cofactor.

Catalyzes the condensation of isopentenyl diphosphate (IPP) with allylic pyrophosphates generating different type of terpenoids. The protein is Isoprenyl transferase of Geobacter sulfurreducens (strain ATCC 51573 / DSM 12127 / PCA).